The sequence spans 441 residues: Aminopeptidase C (441 aa).

Active-site residues include cysteine 70, histidine 361, and asparagine 382.

It belongs to the peptidase C1 family.

It catalyses the reaction Inactivates bleomycin B2 (a cytotoxic glycometallopeptide) by hydrolysis of a carboxyamide bond of beta-aminoalanine, but also shows general aminopeptidase activity. The specificity varies somewhat with source, but amino acid arylamides of Met, Leu and Ala are preferred.. The chain is Aminopeptidase C (pepC) from Listeria innocua serovar 6a (strain ATCC BAA-680 / CLIP 11262).